The sequence spans 479 residues: MFS-type transporter lnaF (479 aa).

11 helical membrane-spanning segments follow: residues 47 to 67, 71 to 91, 104 to 124, 136 to 156, 177 to 197, 208 to 228, 250 to 270, 283 to 303, 306 to 326, 344 to 364, and 372 to 392; these read WIYLVALALFEIGSLVCGFTP, GLIIGRAITGLGSAGLFSGAI, LLCISVIMCLFGVADVAGPLI, WCFYINLPFGGLTALAIVFLL, LVGLLFLFPAVICLLLVLSWG, IIGLIVGFTALILVFIVVQWW, IFSFCITGAMMAFTYHLPIWF, LMSIPTILGMTICSLLSAVLV, IGFYTPFMYAAPVLSVIGAGL, IPFGIGLGIGLSQPMVVVQAV, and LAIAITAFMESLGGSVAISVA. The N-linked (GlcNAc...) asparagine glycan is linked to asparagine 416. The chain crosses the membrane as a helical span at residues 442–462; the sequence is LAITQALYVGVALSSLAIVGA.

This sequence belongs to the major facilitator superfamily. TCR/Tet family.

It localises to the cell membrane. In terms of biological role, MFS-type transporter; part of the lnb gene cluster that mediates the biosynthesis of diastereomeric piperazines. Lna and lnb clusters encode sets of enzymes that produce overlapping sets of previously undescribed metabolites such as piperazinomycin-like metabolites or morpholine. The lna and lnb biosynthetic pathways appear to be part of a signaling network that controls the formation of sclerotia, a resilient overwintering structure. May be involved in the secretion of the metabolites produced by the lna and lnb clusters. The chain is MFS-type transporter lnaF from Aspergillus flavus (strain ATCC 200026 / FGSC A1120 / IAM 13836 / NRRL 3357 / JCM 12722 / SRRC 167).